A 127-amino-acid polypeptide reads, in one-letter code: Protein ApaG (127 aa).

Residues 3–127 (DDPRYRVEVE…FVLSVPRTLH (125 aa)) enclose the ApaG domain.

This Xanthomonas campestris pv. campestris (strain 8004) protein is Protein ApaG.